The primary structure comprises 224 residues: Small ribosomal subunit protein uS3c (224 aa).

The KH type-2 domain occupies isoleucine 43–lysine 124.

Belongs to the universal ribosomal protein uS3 family. As to quaternary structure, part of the 30S ribosomal subunit.

Its subcellular location is the plastid. The protein localises to the chloroplast. The protein is Small ribosomal subunit protein uS3c (rps3) of Saccharum hybrid (Sugarcane).